Consider the following 291-residue polypeptide: Ribosomal RNA small subunit methyltransferase I (291 aa).

It belongs to the methyltransferase superfamily. RsmI family.

The protein resides in the cytoplasm. It carries out the reaction cytidine(1402) in 16S rRNA + S-adenosyl-L-methionine = 2'-O-methylcytidine(1402) in 16S rRNA + S-adenosyl-L-homocysteine + H(+). Functionally, catalyzes the 2'-O-methylation of the ribose of cytidine 1402 (C1402) in 16S rRNA. This Neisseria meningitidis serogroup A / serotype 4A (strain DSM 15465 / Z2491) protein is Ribosomal RNA small subunit methyltransferase I.